Consider the following 73-residue polypeptide: MPKKGIHPQWYPEAKVICNGEVVMTVGSTKPELKVDVWSGNHPFFTGSQKIIDSEGRVDKFMRKYGMGGKKAR.

It belongs to the bacterial ribosomal protein bL31 family. Type A subfamily. As to quaternary structure, part of the 50S ribosomal subunit.

Binds the 23S rRNA. This Synechococcus sp. (strain JA-3-3Ab) (Cyanobacteria bacterium Yellowstone A-Prime) protein is Large ribosomal subunit protein bL31.